An 824-amino-acid chain; its full sequence is Frameshifted structural polyprotein (824 aa).

Polar residues predominate over residues 1-10; it reads MEFIPTQTFY. The interval 1 to 104 is disordered; it reads MEFIPTQTFY…KKKKPGRRER (104 aa). The span at 22–44 shows a compositional bias: low complexity; the sequence is RPTIQVIRPRPRPQRQAGQLAQL. The interval 36 to 68 is host transcription inhibition; it reads RQAGQLAQLISAVNKLTMRAVPQQKPRKNRKNK. Residues 60 to 72 are compositionally biased toward basic residues; that stretch reads KPRKNRKNKKQKQ. The Nuclear localization signal motif lies at 61 to 99; that stretch reads PRKNRKNKKQKQKQQAPQNNTNQKKQPPKKKPAQKKKKP. Residues 73-85 show a composition bias toward low complexity; the sequence is KQQAPQNNTNQKK. Residues 84–114 are binding to the viral RNA; the sequence is KKQPPKKKPAQKKKKPGRRERMCMKIENDCI. Residues 86–101 are compositionally biased toward basic residues; sequence QPPKKKPAQKKKKPGR. 2 ribosome-binding regions span residues 91–100 and 99–113; these read KPAQKKKKPG and PGRR…ENDC. C113 and C128 are disulfide-bonded. A Peptidase S3 domain is found at 113 to 261; sequence CIFEVKHEGK…KITPEGAEEW (149 aa). Residue H139 is the Charge relay system of the active site. The Nuclear export signal signature appears at 144 to 154; sequence IDNADLAKLAF. D161 serves as the catalytic Charge relay system. The interval 183–193 is dimerization of the capsid protein; that stretch reads PEGYYNWHHGA. The active-site Charge relay system is S213. Positions 219–223 are dimerization of the capsid protein; it reads DNKGR. The interval 262 to 274 is functions as an uncleaved signal peptide for the precursor of protein E3/E2; that stretch reads SLAIPVMCLLANT. Topologically, residues 262 to 692 are extracellular; the sequence is SLAIPVMCLL…YYYELYPTMT (431 aa). Residues N273, N588, and N670 are each glycosylated (N-linked (GlcNAc...) asparagine; by host). Residues 693–713 traverse the membrane as a helical segment; that stretch reads VVVVSVASFILLSMVGMAVGM. Residues 714-748 are Cytoplasmic-facing; that stretch reads CMCARRRCITPYELTPGATVPFLLSLICCIRTAKA. S-palmitoyl cysteine; by host attachment occurs at residues C721, C741, and C742. The transient transmembrane before p62-6K protein processing stretch occupies residues 721-741; the sequence is CITPYELTPGATVPFLLSLIC. At 749-763 the chain is on the extracellular side; the sequence is ATYQEAAVYLWNEQQ. A helical transmembrane segment spans residues 764 to 784; that stretch reads PLFWLQALIPLAALIVLCNCL. Over 785–795 the chain is Cytoplasmic; it reads RLLPCCCKTLA.

The protein belongs to the alphavirus frameshifted structural polyprotein family. As to quaternary structure, homodimer. Homomultimer. Interacts with host karyopherin KPNA4; this interaction allows the nuclear import of the viral capsid protein. Interacts with spike glycoprotein E2. Interacts with host IRAK1; the interaction leads to inhibition of IRAK1-dependent signaling. In terms of assembly, the precursor of protein E3/E2 and E1 form a heterodimer shortly after synthesis. Processing of the precursor of protein E3/E2 into E2 and E3 results in a heterodimer of the spike glycoproteins E2 and E1. Spike at virion surface are constituted of three E2-E1 heterodimers. Interacts with 6K protein. Interacts with host MXRA8; this interaction mediates virus entry. Post-translationally, specific enzymatic cleavages in vivo yield mature proteins. Capsid protein is auto-cleaved during polyprotein translation, unmasking a signal peptide at the N-terminus of the precursor of E3/E2. The remaining polyprotein is then targeted to the host endoplasmic reticulum, where host signal peptidase cleaves it into pE2 and TF. pE2 is further processed to mature E3 and E2 by host furin in trans-Golgi vesicle. Palmitoylated via thioester bonds. These palmitoylations may induce disruption of the C-terminus transmembrane. This would result in the reorientation of E2 C-terminus from lumenal to cytoplasmic side. In terms of processing, palmitoylated via thioester bonds.

It is found in the virion. Its subcellular location is the host cytoplasm. The protein resides in the host cell membrane. The protein localises to the host nucleus. It localises to the virion membrane. The enzyme catalyses Autocatalytic release of the core protein from the N-terminus of the togavirus structural polyprotein by hydrolysis of a -Trp-|-Ser- bond.. Functionally, forms an icosahedral capsid with a T=4 symmetry composed of 240 copies of the capsid protein surrounded by a lipid membrane through which penetrate 80 spikes composed of trimers of E1-E2 heterodimers. The capsid protein binds to the viral RNA genome at a site adjacent to a ribosome binding site for viral genome translation following genome release. Possesses a protease activity that results in its autocatalytic cleavage from the nascent structural protein. Following its self-cleavage, the capsid protein transiently associates with ribosomes, and within several minutes the protein binds to viral RNA and rapidly assembles into icosahedric core particles. The resulting nucleocapsid eventually associates with the cytoplasmic domain of the spike glycoprotein E2 at the cell membrane, leading to budding and formation of mature virions. In case of infection, new virions attach to target cells and after clathrin-mediated endocytosis their membrane fuses with the host endosomal membrane. This leads to the release of the nucleocapsid into the cytoplasm, followed by an uncoating event necessary for the genomic RNA to become accessible. The uncoating might be triggered by the interaction of capsid proteins with ribosomes. Binding of ribosomes would release the genomic RNA since the same region is genomic RNA-binding and ribosome-binding. Specifically inhibits interleukin-1 receptor-associated kinase 1/IRAK1-dependent signaling during viral entry, representing a means by which the alphaviruses may evade innate immune detection and activation prior to viral gene expression. In terms of biological role, provides the signal sequence for the translocation of the precursor of protein E3/E2 to the host endoplasmic reticulum. Furin-cleaved E3 remains associated with spike glycoprotein E1 and mediates pH protection of the latter during the transport via the secretory pathway. After virion release from the host cell, the assembly protein E3 is gradually released in the extracellular space. Plays a role in viral attachment to target host cell, by binding to the cell receptor. Synthesized as a p62 precursor which is processed by furin at the cell membrane just before virion budding, giving rise to E2-E1 heterodimer. The p62-E1 heterodimer is stable, whereas E2-E1 is unstable and dissociate at low pH. p62 is processed at the last step, presumably to avoid E1 fusion activation before its final export to cell surface. E2 C-terminus contains a transitory transmembrane that would be disrupted by palmitoylation, resulting in reorientation of the C-terminal tail from lumenal to cytoplasmic side. This step is critical since E2 C-terminus is involved in budding by interacting with capsid proteins. This release of E2 C-terminus in cytoplasm occurs lately in protein export, and precludes premature assembly of particles at the endoplasmic reticulum membrane. Its function is as follows. Plays a role in viral assembly and release. The polypeptide is Frameshifted structural polyprotein (Aedes aegypti (Yellowfever mosquito)).